We begin with the raw amino-acid sequence, 383 residues long: Cysteine protease StiP (383 aa).

It belongs to the cysteine protease StiP family. Post-translationally, is probably processed via an autocatalytic removal of a proregion of about 100 amino acids.

Is inhibited by bromopyruvate in vitro. Activity is not affected by the presence of tellurite. Cysteine protease that may play a role in regulating cell morphology in response to stressful conditions which likely cause oxidative damage. Appears to catalyze its own cleavage, which probably leads to its activation. This chain is Cysteine protease StiP (stiP), found in Acinetobacter baylyi (strain ATCC 33305 / BD413 / ADP1).